The sequence spans 301 residues: Probable alpha-L-glutamate ligase (301 aa).

Residues 104-287 (LQLLSRKGVG…IAGMIIEYIE (184 aa)) form the ATP-grasp domain. ATP contacts are provided by residues Lys-141, 178–179 (EY), Asp-187, and 211–213 (RSN). Residues Asp-248, Glu-260, and Asn-262 each coordinate Mg(2+). Positions 248, 260, and 262 each coordinate Mn(2+).

Belongs to the RimK family. The cofactor is Mg(2+). Requires Mn(2+) as cofactor.

The protein is Probable alpha-L-glutamate ligase of Photobacterium profundum (strain SS9).